Consider the following 458-residue polypeptide: UDP-N-acetylmuramate--L-alanine ligase (458 aa).

115–121 (GSHGKTT) provides a ligand contact to ATP.

Belongs to the MurCDEF family.

It is found in the cytoplasm. The enzyme catalyses UDP-N-acetyl-alpha-D-muramate + L-alanine + ATP = UDP-N-acetyl-alpha-D-muramoyl-L-alanine + ADP + phosphate + H(+). It participates in cell wall biogenesis; peptidoglycan biosynthesis. Functionally, cell wall formation. This is UDP-N-acetylmuramate--L-alanine ligase from Anaeromyxobacter dehalogenans (strain 2CP-C).